Consider the following 872-residue polypeptide: TATA box-binding protein-associated factor RNA polymerase I subunit B (872 aa).

The RRN7-type zinc finger occupies 6 to 40 (ETMQLENMHCDVCEGTTFQEREGFYYCVECGTQKD). Zn(2+)-binding residues include cysteine 15, cysteine 18, cysteine 32, and cysteine 35. Residues 41–72 (QIRAVDITAEDNFDDTAAGRYTARTIRQKKDT) are B-reader. The tract at residues 73-84 (EKEDEDDITSWE) is B-linker. The segment at 85–312 (FYNYVLRGFL…LPGNVAAKGK (228 aa)) is N-terminal cyclin fold. A disordered region spans residues 187–206 (DASGYRSHGGASESEGEQSL).

This sequence belongs to the RRN7/TAF1B family.

It is found in the nucleus. Its subcellular location is the nucleolus. Functionally, component of RNA polymerase I core factor complex that acts as a GTF2B/TFIIB-like factor and plays a key role in multiple steps during transcription initiation such as pre-initiation complex (PIC) assembly and postpolymerase recruitment events in polymerase I (Pol I) transcription. Binds rDNA promoters and plays a role in Pol I recruitment. This chain is TATA box-binding protein-associated factor RNA polymerase I subunit B, found in Drosophila melanogaster (Fruit fly).